We begin with the raw amino-acid sequence, 229 residues long: DNA mismatch repair protein MutH (229 aa).

This sequence belongs to the MutH family.

The protein resides in the cytoplasm. In terms of biological role, sequence-specific endonuclease that cleaves unmethylated GATC sequences. It is involved in DNA mismatch repair. This chain is DNA mismatch repair protein MutH, found in Escherichia coli O17:K52:H18 (strain UMN026 / ExPEC).